The chain runs to 404 residues: Inner membrane transport protein YdiM (404 aa).

The Periplasmic segment spans residues 1–5 (MKNPY). Residues 6–26 (FPTALGLYFNYLVHGMGVLLM) form a helical membrane-spanning segment. Topologically, residues 27-43 (SLNMASLETLWQTNAAG) are cytoplasmic. The helical transmembrane segment at 44–64 (VSIVISSLGIGRLSVLLFAGL) threads the bilayer. Over 65 to 84 (LSDRFGRRPFIMLGMCCYMA) the chain is Periplasmic. The helical transmembrane segment at 85-105 (FFFGILQTNNIIIAYVFGFLA) threads the bilayer. Residues 106 to 132 (GMANSFLDAGTYPSLMEAFPRSPGTAN) lie on the Cytoplasmic side of the membrane. Residues 133–153 (ILIKAFVSSGQFLLPLIISLL) form a helical membrane-spanning segment. The Periplasmic segment spans residues 154–157 (VWAE). The chain crosses the membrane as a helical span at residues 158–178 (LWFGWSFMIAAGIMFINALFL). The Cytoplasmic portion of the chain corresponds to 179 to 206 (YRCTFPPHPGRRLPVIKKTTSSTEHRCS). The chain crosses the membrane as a helical span at residues 207–227 (IIDLASYTLYGYISMATFYLV). Residues 228–246 (SQWLAQYGQFVAGMSYTMS) lie on the Periplasmic side of the membrane. A helical transmembrane segment spans residues 247-267 (IKLLSIYTVGSLLCVFITAPL). The Cytoplasmic segment spans residues 268–273 (IRNTVR). The chain crosses the membrane as a helical span at residues 274-294 (PTTLLMLYTFISFIALFTVCL). Topologically, residues 295–296 (HP) are periplasmic. The chain crosses the membrane as a helical span at residues 297–317 (TFYVVIIFAFVIGFTSAGGVV). Residues 318–336 (QIGLTLMAERFPYAKGKAT) are Cytoplasmic-facing. A helical transmembrane segment spans residues 337 to 357 (GIYYSAGSIATFTIPLITAHL). Residues 358 to 364 (SQRSIAD) lie on the Periplasmic side of the membrane. The chain crosses the membrane as a helical span at residues 365–385 (IMWFDTAIAAIGFLLALFIGL). At 386–404 (RSRKKTRHHSLKENVAPGG) the chain is on the cytoplasmic side.

This sequence belongs to the major facilitator superfamily.

It is found in the cell inner membrane. This chain is Inner membrane transport protein YdiM (ydiM), found in Escherichia coli (strain K12).